A 400-amino-acid chain; its full sequence is S-adenosylmethionine synthase (400 aa).

Gly-137–Asp-142 contacts ATP.

Belongs to the AdoMet synthase 2 family. Mg(2+) is required as a cofactor.

The catalysed reaction is L-methionine + ATP + H2O = S-adenosyl-L-methionine + phosphate + diphosphate. It functions in the pathway amino-acid biosynthesis; S-adenosyl-L-methionine biosynthesis; S-adenosyl-L-methionine from L-methionine: step 1/1. In terms of biological role, catalyzes the formation of S-adenosylmethionine from methionine and ATP. The chain is S-adenosylmethionine synthase from Haloarcula marismortui (strain ATCC 43049 / DSM 3752 / JCM 8966 / VKM B-1809) (Halobacterium marismortui).